Consider the following 259-residue polypeptide: Indole-3-glycerol phosphate synthase (259 aa).

The protein belongs to the TrpC family.

The catalysed reaction is 1-(2-carboxyphenylamino)-1-deoxy-D-ribulose 5-phosphate + H(+) = (1S,2R)-1-C-(indol-3-yl)glycerol 3-phosphate + CO2 + H2O. It functions in the pathway amino-acid biosynthesis; L-tryptophan biosynthesis; L-tryptophan from chorismate: step 4/5. This is Indole-3-glycerol phosphate synthase from Dehalococcoides mccartyi (strain CBDB1).